The primary structure comprises 240 residues: Probable septum site-determining protein MinC (240 aa).

It belongs to the MinC family. In terms of assembly, interacts with MinD and FtsZ.

Cell division inhibitor that blocks the formation of polar Z ring septums. Rapidly oscillates between the poles of the cell to destabilize FtsZ filaments that have formed before they mature into polar Z rings. Prevents FtsZ polymerization. The sequence is that of Probable septum site-determining protein MinC from Buchnera aphidicola subsp. Cinara cedri (strain Cc).